We begin with the raw amino-acid sequence, 398 residues long: S-adenosylmethionine synthase (398 aa).

Position 16 (histidine 16) interacts with ATP. Residue aspartate 18 coordinates Mg(2+). Residue glutamate 51 participates in K(+) binding. L-methionine is bound by residues glutamate 64 and glutamine 108. A flexible loop region spans residues 108–118 (QSADIAQGVDA). ATP-binding positions include 176–178 (DSK), 242–243 (KF), aspartate 251, 257–258 (RK), alanine 274, and lysine 278. Aspartate 251 provides a ligand contact to L-methionine. An L-methionine-binding site is contributed by lysine 282.

Belongs to the AdoMet synthase family. Homotetramer; dimer of dimers. Requires Mg(2+) as cofactor. The cofactor is K(+).

It is found in the cytoplasm. It catalyses the reaction L-methionine + ATP + H2O = S-adenosyl-L-methionine + phosphate + diphosphate. It functions in the pathway amino-acid biosynthesis; S-adenosyl-L-methionine biosynthesis; S-adenosyl-L-methionine from L-methionine: step 1/1. Catalyzes the formation of S-adenosylmethionine (AdoMet) from methionine and ATP. The overall synthetic reaction is composed of two sequential steps, AdoMet formation and the subsequent tripolyphosphate hydrolysis which occurs prior to release of AdoMet from the enzyme. The sequence is that of S-adenosylmethionine synthase from Rhodopseudomonas palustris (strain HaA2).